We begin with the raw amino-acid sequence, 965 residues long: Klaroid protein (965 aa).

The segment at methionine 1–phenylalanine 20 is disordered. 2 consecutive transmembrane segments (helical) span residues threonine 303–leucine 323 and phenylalanine 343–glutamine 363. A coiled-coil region spans residues serine 585–glutamate 612. The SUN domain occupies glycine 801–proline 963.

Core component of the LINC complex which is composed of inner nuclear membrane SUN domain-containing proteins coupled to outer nuclear membrane KASH domain-containing nesprins. In terms of tissue distribution, expressed in all cells in the eye disk.

Its subcellular location is the membrane. The protein resides in the cytoplasm. It localises to the cytoskeleton. The protein localises to the microtubule organizing center. It is found in the perinuclear region. Functionally, component of the LINC (LInker of Nucleoskeleton and Cytoskeleton) complex involved in the connection between the nuclear lamina and the cytoskeleton. Is required to nuclear migration in eye and to anchor klar in the nuclear membrane. The chain is Klaroid protein from Drosophila melanogaster (Fruit fly).